The chain runs to 308 residues: Methionyl-tRNA formyltransferase (308 aa).

110-113 contacts (6S)-5,6,7,8-tetrahydrofolate; the sequence is SLLP.

Belongs to the Fmt family.

The catalysed reaction is L-methionyl-tRNA(fMet) + (6R)-10-formyltetrahydrofolate = N-formyl-L-methionyl-tRNA(fMet) + (6S)-5,6,7,8-tetrahydrofolate + H(+). Attaches a formyl group to the free amino group of methionyl-tRNA(fMet). The formyl group appears to play a dual role in the initiator identity of N-formylmethionyl-tRNA by promoting its recognition by IF2 and preventing the misappropriation of this tRNA by the elongation apparatus. This Neisseria meningitidis serogroup B (strain ATCC BAA-335 / MC58) protein is Methionyl-tRNA formyltransferase.